The chain runs to 755 residues: Probable ubiquitin carboxyl-terminal hydrolase creB (755 aa).

Positions 1-32 (MGSFLRSLRRDVGPPTPSVGATPAKKEPPVPP) are disordered. A USP domain is found at 55–468 (FGMENYGNTC…CAYVLFYQET (414 aa)). The Nucleophile role is filled by cysteine 64. Disordered stretches follow at residues 119-146 (EKQK…DSPE) and 237-270 (EASK…TPNT). Residues 237–246 (EASKQPEPER) show a composition bias toward basic and acidic residues. A compositionally biased stretch (polar residues) spans 254–270 (ADSTELSGSSGSKTPNT). The active-site Proton acceptor is histidine 419. The disordered stretch occupies residues 495 to 755 (TLKQNGYPLS…LKKKSFSILS (261 aa)). A compositionally biased stretch (low complexity) spans 547 to 560 (ESSPADPSTTASAT). Over residues 577 to 648 (KKSDSHFKKE…RRHSPDDTKK (72 aa)) the composition is skewed to basic and acidic residues. Residues 581–630 (SHFKKERAKEEKERKANEKEKEKQRRRDQEARIREQRREDAEIRAALEAS) adopt a coiled-coil conformation. The segment covering 654–666 (SRLKRGSKSFSHR) has biased composition (basic residues). Positions 693–709 (NGASESQQQLPNGQSPG) are enriched in polar residues. The segment covering 718–733 (TGLDEERDTLKDPKHD) has biased composition (basic and acidic residues). The segment covering 734 to 755 (RSGHHGKWRSFSLKKKSFSILS) has biased composition (basic residues).

Belongs to the peptidase C19 family. As to quaternary structure, interacts with creA, creC and qutD.

It carries out the reaction Thiol-dependent hydrolysis of ester, thioester, amide, peptide and isopeptide bonds formed by the C-terminal Gly of ubiquitin (a 76-residue protein attached to proteins as an intracellular targeting signal).. Functionally, ubiquitin thioesterase component of the regulatory network controlling carbon source utilization through ubiquitination and deubiquitination involving creA, creB, creC, creD and acrB. Deubiquitinates the creA catabolic repressor and the quinate permease qutD. Also plays a role in response to carbon starvation and the control of extracellular proteases activity. The chain is Probable ubiquitin carboxyl-terminal hydrolase creB (creB) from Aspergillus flavus (strain ATCC 200026 / FGSC A1120 / IAM 13836 / NRRL 3357 / JCM 12722 / SRRC 167).